A 328-amino-acid polypeptide reads, in one-letter code: D-cysteine desulfhydrase (328 aa).

K51 is subject to N6-(pyridoxal phosphate)lysine.

It belongs to the ACC deaminase/D-cysteine desulfhydrase family. In terms of assembly, homodimer. The cofactor is pyridoxal 5'-phosphate.

It carries out the reaction D-cysteine + H2O = hydrogen sulfide + pyruvate + NH4(+) + H(+). In terms of biological role, catalyzes the alpha,beta-elimination reaction of D-cysteine and of several D-cysteine derivatives. It could be a defense mechanism against D-cysteine. This chain is D-cysteine desulfhydrase, found in Salmonella paratyphi B (strain ATCC BAA-1250 / SPB7).